A 108-amino-acid chain; its full sequence is TYRO protein tyrosine kinase-binding protein (108 aa).

The signal sequence occupies residues 1 to 25 (MGRLGPSNGLLPLLLAVGGFSLVQA). The Extracellular segment spans residues 26–36 (QRECSCSAVSP). The chain crosses the membrane as a helical span at residues 37 to 57 (GILAGIVLGDLVLTLLIALAV). Residue Asp46 participates in Ca(2+) binding. At 58–108 (YSLGRLVPRTRGAVDVTRKQHIAETESAYQELQGQRSDVYSDLNTQRQYYK) the chain is on the cytoplasmic side. Residues 75 to 103 (RKQHIAETESAYQELQGQRSDVYSDLNTQ) form the ITAM domain. Phosphotyrosine occurs at positions 86 and 97.

Belongs to the TYROBP family. As to quaternary structure, homodimer; disulfide-linked. Homotrimer; disulfide-linked. Homotetramer; disulfide-linked. Homotrimers and homotetramers form when low levels of partner receptors are available and is competitive with assembly with interacting receptors. They may represent alternative oligomerization states or may be intermediates in the receptor assembly process. Binding of a metal cation aids in homooligomerization through coordination of the metal ion by the subunits of the oligomer. Interacts with TREM1. Interacts with TREM2. Interacts with CLECSF5. Interacts with CD300LB and CD300C2. Interacts with CD300E. Interacts (via ITAM domain) with SYK (via SH2 domains); activates SYK mediating neutrophils and macrophages integrin-mediated activation. Interacts with KLRC2. Interacts with CD300H. Interacts with KLRD1. Interacts with SIGLEC1. Following ligand binding by associated receptors, tyrosine phosphorylated in the ITAM domain which leads to activation of additional tyrosine kinases and subsequent cell activation. As to expression, highly expressed in spleen, liver and thymus. Weakly expressed in lymph nodes. Expressed in peripheral blood leukocytes, granulocytes, macrophages, and monocytes. LPS does not increase expression in granulocytes.

It is found in the cell membrane. Functionally, adapter protein which non-covalently associates with activating receptors found on the surface of a variety of immune cells to mediate signaling and cell activation following ligand binding by the receptors. TYROBP is tyrosine-phosphorylated in the ITAM domain following ligand binding by the associated receptors which leads to activation of additional tyrosine kinases and subsequent cell activation. Also has an inhibitory role in some cells. Non-covalently associates with activating receptors of the CD300 family to mediate cell activation. Also mediates cell activation through association with activating receptors of the CD200R family. Required for neutrophil activation mediated by integrin. Required for the activation of myeloid cells mediated by the CLEC5A/MDL1 receptor. Associates with natural killer (NK) cell receptors such as the KLRD1/KLRC2 heterodimer to mediate NK cell activation. Associates with TREM1 to mediate activation of neutrophils and monocytes. Associates with TREM2 on monocyte-derived dendritic cells to mediate up-regulation of chemokine receptor CCR7 and dendritic cell maturation and survival. Association with TREM2 mediates cytokine-induced formation of multinucleated giant cells which are formed by the fusion of macrophages. Stabilizes the TREM2 C-terminal fragment (TREM2-CTF) produced by TREM2 ectodomain shedding which suppresses the release of pro-inflammatory cytokines. In microglia, required with TREM2 for phagocytosis of apoptotic neurons. Required with ITGAM/CD11B in microglia to control production of microglial superoxide ions which promote the neuronal apoptosis that occurs during brain development. Promotes pro-inflammatory responses in microglia following nerve injury which accelerates degeneration of injured neurons. Positively regulates the expression of the IRAK3/IRAK-M kinase and IL10 production by liver dendritic cells and inhibits their T cell allosimulatory ability. Negatively regulates B cell proliferation. Required for CSF1-mediated osteoclast cytoskeletal organization. Positively regulates multinucleation during osteoclast development. The sequence is that of TYRO protein tyrosine kinase-binding protein from Sus scrofa (Pig).